The sequence spans 127 residues: Holo-[acyl-carrier-protein] synthase (127 aa).

Mg(2+) contacts are provided by D9 and E58.

The protein belongs to the P-Pant transferase superfamily. AcpS family. It depends on Mg(2+) as a cofactor.

Its subcellular location is the cytoplasm. It catalyses the reaction apo-[ACP] + CoA = holo-[ACP] + adenosine 3',5'-bisphosphate + H(+). In terms of biological role, transfers the 4'-phosphopantetheine moiety from coenzyme A to a Ser of acyl-carrier-protein. This is Holo-[acyl-carrier-protein] synthase from Shewanella sp. (strain MR-7).